We begin with the raw amino-acid sequence, 249 residues long: DNA repair protein RecO (249 aa).

Belongs to the RecO family.

In terms of biological role, involved in DNA repair and RecF pathway recombination. The protein is DNA repair protein RecO of Leptospira biflexa serovar Patoc (strain Patoc 1 / Ames).